The primary structure comprises 504 residues: Plasma protease C1 inhibitor (504 aa).

The N-terminal stretch at 1–22 (MASRLTPLTLLLLLLAGDRAFS) is a signal peptide. Residues 22 to 67 (SDPEATSHSTQDPLEAQAKSRESFPERDDSWSPPEPTVLPSTWPTT) are disordered. Residues 39–51 (AKSRESFPERDDS) are compositionally biased toward basic and acidic residues. N-linked (GlcNAc...) asparagine glycans are attached at residues N75, N83, and N107. Residues 85–124 (SFSQHSQPAAQLPTDSPGQPPLNSSSQPSTASDLPTQATT) are compositionally biased toward polar residues. Residues 85–141 (SFSQHSQPAAQLPTDSPGQPPLNSSSQPSTASDLPTQATTEPFCPEPLAQCSDSDRD) form a disordered region. Disulfide bonds link C128/C432 and C135/C210. N-linked (GlcNAc...) asparagine glycans are attached at residues N243 and N356.

This sequence belongs to the serpin family. Interacts with MASP1.

The protein localises to the secreted. Its function is as follows. Serine protease inhibitor, which acrs as a regulator of the classical complement pathway. Forms a proteolytically inactive stoichiometric complex with the C1r or C1s proteases. May also regulate blood coagulation, fibrinolysis and the generation of kinins. Very efficient inhibitor of FXIIa. Inhibits chymotrypsin and kallikrein. The sequence is that of Plasma protease C1 inhibitor (Serping1) from Mus musculus (Mouse).